The primary structure comprises 122 residues: Small ribosomal subunit protein uS13 (122 aa).

The tract at residues 98–122 is disordered; the sequence is VRGQRTHTNARTRKGPAKAIAGKKK.

The protein belongs to the universal ribosomal protein uS13 family. Part of the 30S ribosomal subunit. Forms a loose heterodimer with protein S19. Forms two bridges to the 50S subunit in the 70S ribosome.

Located at the top of the head of the 30S subunit, it contacts several helices of the 16S rRNA. In the 70S ribosome it contacts the 23S rRNA (bridge B1a) and protein L5 of the 50S subunit (bridge B1b), connecting the 2 subunits; these bridges are implicated in subunit movement. Contacts the tRNAs in the A and P-sites. In Ruegeria sp. (strain TM1040) (Silicibacter sp.), this protein is Small ribosomal subunit protein uS13.